The primary structure comprises 590 residues: Protein O-linked-mannose beta-1,4-N-acetylglucosaminyltransferase 2 (590 aa).

The Cytoplasmic segment spans residues 1 to 4; that stretch reads MSVG. A helical; Signal-anchor for type II membrane protein membrane pass occupies residues 5-25; it reads TLLNGLLVSIVAALLWKYSKL. Residues 26–590 lie on the Lumenal side of the membrane; sequence SEHAALLEEE…PFADVLMCRT (565 aa). Asparagine 98, asparagine 275, and asparagine 553 each carry an N-linked (GlcNAc...) asparagine glycan. Residues 494 to 590 form the Fibronectin type-III domain; that stretch reads RVRDPQCQTS…PFADVLMCRT (97 aa).

This sequence belongs to the glycosyltransferase 61 family.

The protein localises to the endoplasmic reticulum membrane. The enzyme catalyses 3-O-(alpha-D-mannosyl)-L-threonyl-[protein] + UDP-N-acetyl-alpha-D-glucosamine = 3-O-(N-acetyl-beta-D-glucosaminyl-(1-&gt;4)-alpha-D-mannosyl)-L-threonyl-[protein] + UDP + H(+). The protein operates within protein modification; protein glycosylation. Functionally, O-linked mannose beta-1,4-N-acetylglucosaminyltransferase that transfers UDP-N-acetyl-D-glucosamine to the 4-position of the mannose to generate N-acetyl-D-glucosamine-beta-1,4-O-D-mannosylprotein. Involved in the biosynthesis of the phosphorylated O-mannosyl trisaccharide (N-acetylgalactosamine-beta-3-N-acetylglucosamine-beta-4-(phosphate-6-)mannose), a carbohydrate structure present in alpha-dystroglycan (DAG1), which is required for binding laminin G-like domain-containing extracellular proteins with high affinity. The sequence is that of Protein O-linked-mannose beta-1,4-N-acetylglucosaminyltransferase 2 (pomgnt2) from Takifugu rubripes (Japanese pufferfish).